A 719-amino-acid polypeptide reads, in one-letter code: MFGKKKKKIEISGPSNFEHRVHTGFDPQEQKFTGLPQQWHSLLADTANRPKPMVDPSCITPIQLAPMKTIVRGNKSCKETSINGLLEDFDNISVTRSNSLRKESPPTPDQGAASRIQGHSEENGFITFSQYSSESDTTADYTTEKYRDRSLYGDDLDLYYKSSHAAKQNGHAMKMKHGDAYYPEMKSLKTDLAGFPVDYHTHLDSLRKSSEYGDLRWDYQRASSSSPLDYSFQLTPSRTAGTSRCSKESLAYSESDWGPSLDDYDRRPKSSYLHQTSPQPAMRQRSKSGSGLQEPMMPFGASAFKTHPQGHSYNSYTYPRLSEPTMCIPKVDYDRAQMVFSPPLSGSDTYPRGPTKLPQSQSKAGYSSGSHQYPSGYHKASLYHHPSLQTSSQYISTASYLSSLSISSSTYPPPSWGSSSDQQPSRVSHEQFRAALQLVVSPGDPREYLDNFIKIGEGSTGIVCIATEKHTGKQVAVKKMDLRKQQRRELLFNEVVIMRDYHHDNVVDMYNSYLVGDELWVVMEFLEGGALTDIVTHTRMNEEQIATVCLSVLKALSYLHNQGVIHRDIKSDSILLTSDGRIKLSDFGFCAQVSKEVPKRKSLVGTPYWMAPEVISRLPYGTEVDIWSLGIMVIEMIDGEPPYFNEPPLQAMRRIRDSLPPRVKDLHKVSSMLRGFLDLMLVREPSQRATAQELLGHPFLKLAGPPSCIVPLMRQYRHH.

Disordered regions lie at residues 1–28 (MFGK…FDPQ), 96–118 (RSNS…RIQG), 226–245 (SPLD…TSRC), 253–298 (SESD…PMMP), and 339–372 (VFSP…GSHQ). Positions 11–24 (ISGPSNFEHRVHTG) constitute a CRIB domain. The interval 25–448 (FDPQEQKFTG…VVSPGDPREY (424 aa)) is linker. Serine 104 carries the phosphoserine modification. Threonine 107 carries the phosphothreonine modification. Over residues 226–244 (SPLDYSFQLTPSRTAGTSR) the composition is skewed to polar residues. Residues 357 to 372 (LPQSQSKAGYSSGSHQ) show a composition bias toward polar residues. The region spanning 449 to 700 (LDNFIKIGEG…AQELLGHPFL (252 aa)) is the Protein kinase domain. ATP contacts are provided by residues 455-463 (IGEGSTGIV) and lysine 478. Aspartate 568 functions as the Proton acceptor in the catalytic mechanism.

Belongs to the protein kinase superfamily. STE Ser/Thr protein kinase family. STE20 subfamily. As to quaternary structure, interacts tightly with GTP-bound but not GDP-bound CDC42/p21 and RAC1. Interacts with MARK2, leading to inhibit MARK2 independently of kinase activity. Interacts with RHOD and RHOH. Autophosphorylated when activated by CDC42/p21. As to expression, highly expressed in brain and eye. Also expressed in adrenal gland, pancreas, prostate and testes. Within the brain, expression is restricted to neurons. Present in brain but not in kidney, lung and spleen (at protein level).

The protein localises to the mitochondrion. It localises to the cytoplasm. It is found in the nucleus. It catalyses the reaction L-seryl-[protein] + ATP = O-phospho-L-seryl-[protein] + ADP + H(+). It carries out the reaction L-threonyl-[protein] + ATP = O-phospho-L-threonyl-[protein] + ADP + H(+). Serine/threonine protein kinase that plays a role in a variety of different signaling pathways including cytoskeleton regulation, cell migration, proliferation or cell survival. Activation by various effectors including growth factor receptors or active CDC42 and RAC1 results in a conformational change and a subsequent autophosphorylation on several serine and/or threonine residues. Phosphorylates the proto-oncogene RAF1 and stimulates its kinase activity. Promotes cell survival by phosphorylating the BCL2 antagonist of cell death BAD. Phosphorylates CTNND1, probably to regulate cytoskeletal organization and cell morphology. Keeps microtubules stable through MARK2 inhibition and destabilizes the F-actin network leading to the disappearance of stress fibers and focal adhesions. The polypeptide is Serine/threonine-protein kinase PAK 5 (Mus musculus (Mouse)).